Reading from the N-terminus, the 509-residue chain is FAD-linked oxidoreductase anuG (509 aa).

Positions 1–21 (MVQISNVWGFGLAIMASLAAA) are cleaved as a signal peptide. The 172-residue stretch at 75–246 (YAAPKFTVVV…TSFEMSIYPT (172 aa)) folds into the FAD-binding PCMH-type domain.

It belongs to the oxygen-dependent FAD-linked oxidoreductase family. Requires FAD as cofactor.

The enzyme catalyses (2S,9S)-annullatin H + 2 A = (2S,9S)-annullatin D + 2 AH2. It participates in secondary metabolite biosynthesis. Functionally, cytochrome P450 monooxygenase; part of the gene cluster that mediates the biosynthesis of annullatin D, an alkylated aromatic polyketide with a fused dihydrobenzofuran lactone ring system that exhibits potent agonistic activities toward the cannabinoid receptors. Within the pathway, anuG is responsible for the five-member lactone ring formation in (2S, 9S)-annullatin D via oxidative lactonization between the two hydroxyl groups. The annullatin backbone 2-hydroxymethyl-3-pentylphenol is assembled from one acetyl-CoA starter unit and 5 malonyl-CoA elongation units by cooperation of the highly reducing polyketide synthase anuA, the short-chain dehydrogenase anuB and the oxidoreductase anuC, before being hydroxylated at the C-5 alkyl chain by the cytochrome P450 monooxygenase anuE to form (8S)-annullatin E. The prenyltransferase anuH subsequently installs one isoprenyl group at the benzene ring to form (8S)-annullatin J. Enzymatic or nonenzymatic dihydro-benzofuran ring formation between the prenyl and the phenolic hydroxyl groups in (8S)-annullatin J results in two diastereomers (2S,9S)-annullatin H and compound 12. The intermediate (2S,9S)-annullatin H is then converted to (2S,9S)-annullatin D by the FAD-linked oxidoreductase anuG-catalyzed five-member lactone ring formation. The isomer 12 acts as a substrate for the short-chain dehydrogenase anuF and is oxidized to (2R)-annullatin F, which is subsequently acetylated by an acetyltransferase leading to (2R)-annullatin G formation. The remaining enzymes identified within the cluster, anuD, anuI and anuJ, seem not to be involved in annullatin biosynthesis. The chain is FAD-linked oxidoreductase anuG from Penicillium roqueforti (strain FM164).